The chain runs to 77 residues: Small integral membrane protein 7 (77 aa).

The N-terminal stretch at methionine 1–alanine 17 is a signal peptide. The Extracellular portion of the chain corresponds to valine 18–tyrosine 55. Residues phenylalanine 56–glycine 76 form a helical membrane-spanning segment. A topological domain (cytoplasmic) is located at residue serine 77.

The protein belongs to the SMIM7 family.

Its subcellular location is the membrane. In Danio rerio (Zebrafish), this protein is Small integral membrane protein 7 (smim7).